Reading from the N-terminus, the 148-residue chain is uncharacterized protein (148 aa).

Residues 4–65 (LDKVDIQLVK…IPDLDKLGYM (62 aa)) form the HTH asnC-type domain. A DNA-binding region (H-T-H motif) is located at residues 23-42 (YRELAELMNTTRQRIARRIT).

This is an uncharacterized protein from Pyrococcus abyssi (strain GE5 / Orsay).